The following is a 342-amino-acid chain: Phomopsin biosynthesis cluster protein B (342 aa).

A disordered region spans residues 1–22 (MESIAKAKSLPNKGRTYDSQRP). The chain crosses the membrane as a helical span at residues 87 to 107 (VLIIGCAVISLFAIIGALGFA). Residues 118 to 186 (CASPAHQNPH…QCGESPDEAQ (69 aa)) are disordered. The span at 144–155 (HSGSHSSSSSTN) shows a compositional bias: low complexity. Asn-248 carries N-linked (GlcNAc...) asparagine glycosylation.

The protein resides in the membrane. Its function is as follows. Part of the gene cluster that mediates the biosynthesis of the phomopsins, a group of hexapeptide mycotoxins which infects lupins and causes lupinosis disease in livestock. The role of phomB within the phomopsins biosynthesis pathway has still to be determined. The pathway starts with the processing of the precursor phomA by several endopeptidases including kexin proteases as well as the cluster-specific S41 family peptidase phomP1 and the oligopeptidase phomG to produce 10 identical copies of the hexapeptide Tyr-Val-Ile-Pro-Ile-Asp. After being excised from the precursor peptide, the core peptides are cyclized and modified post-translationally by enzymes encoded within the gene cluster. The timing and order of proteolysis of the phomA precursor and PTMs are still unknown. Two tyrosinase-like enzymes, phomQ1 and phomQ2, catalyze the chlorination and hydroxylation of Tyr, respectively. PhomYb, is proposed to be involved in the construction of the macrocyclic structure. The other 4 ustYa family proteins may be involved in PTMs that generate the unique structure of phomopsin A. PhomYa is required for the hydroxylation of C-beta of Tyr. PhomYc, phomYd, and phomYe are responsible for the biosynthesis of 2,3-dehydroisoleucine (dIle), 2,3-dehydroaspartic acid (dAsp), and 3,4-dehydroproline (dPro), respectively. While dIle formation by phomYc is indispensable for the installation of dAsp by phomYd, the order of the other PTMs have not been elucidated yet. Most of the biosynthetic enzymes likely have broad substrate specificity, and thus, there might be a metabolic grid from a precursor to phomopsin A. The enzyme(s) responsible for the biosynthesis of 3,4-dehydrovaline (dVal) have also not been identified yet. Finally, phomM acts as an S-adenosylmethionine-dependent alpha-N-methyltransferase that catalyzes two successive N-methylation reactions, converting N-desmethyl-phomopsin A to phomopsin A and phomopsin A further to an N,N-dimethylated congener called phomopsin E. In Diaporthe leptostromiformis (Lupinosis disease fungus), this protein is Phomopsin biosynthesis cluster protein B.